The primary structure comprises 417 residues: Serine/threonine-protein phosphatase 4 regulatory subunit 2 (417 aa).

Polar residues-rich tracts occupy residues 140–149, 158–170, and 186–196; these read EKNNSSSLNR, NSPS…NING, and APMTTNGLPES. The disordered stretch occupies residues 140–417; that stretch reads EKNNSSSLNR…EVTDEPMEQD (278 aa). The residue at position 159 (S159) is a Phosphoserine. Basic and acidic residues predominate over residues 197–213; the sequence is TDSKEANLQQNEEKSHS. The segment covering 214-226 has biased composition (low complexity); the sequence is DSSTSESEVSSVS. S226 carries the phosphoserine modification. Positions 231 to 258 are enriched in basic and acidic residues; sequence KHPDEDAVEAEGHEVKRLRFDKEGEVRE. A compositionally biased stretch (polar residues) spans 259–269; sequence TASQTTSSEIS. A compositionally biased stretch (basic and acidic residues) spans 283 to 297; that stretch reads QDKDKDSRCTRQHCT. Acidic residues predominate over residues 298–311; it reads EEDEEEDEEEEEES. The segment covering 318 to 327 has biased composition (basic and acidic residues); the sequence is MIPERKNQEK. Residues 338–350 are compositionally biased toward acidic residues; sequence ETSEENNQMEESD. Residues 353–363 are compositionally biased toward basic and acidic residues; that stretch reads QAEKDLLHSEG. The span at 385-399 shows a compositional bias: polar residues; that stretch reads GSNSSKTGEILSESS. Residues 400–417 are compositionally biased toward acidic residues; it reads MENDDEATEVTDEPMEQD.

The protein belongs to the PPP4R2 family. In terms of assembly, serine/threonine-protein phosphatase 4 (PP4) occurs in different assemblies of the catalytic and one or more regulatory subunits. Component of the PP4 complexes PPP4C-PPP4R2, PPP4C-PPP4R2-PPP4R3A and PPP4C-PPP4R2-PPP4R3B. The PPP4C-PPP4R2 complex appears to be a tetramer composed of 2 molecules of PPP4C and 2 molecules of PPP4R2. Interacts with DDX20/GEMIN3 and GEMIN4. Interacts with RPA2; this DNA damage-dependent interaction recruits PPP4C leading to RPA2 dephosphorylation.

Its subcellular location is the cytoplasm. It localises to the cytoskeleton. The protein localises to the microtubule organizing center. It is found in the centrosome. The protein resides in the nucleus. Regulatory subunit of serine/threonine-protein phosphatase 4 (PP4). May regulate the activity of PPP4C at centrosomal microtubule organizing centers. Its interaction with the SMN complex leads to enhance the temporal localization of snRNPs, suggesting a role of PPP4C in maturation of spliceosomal snRNPs. The PPP4C-PPP4R2-PPP4R3A PP4 complex specifically dephosphorylates H2AX phosphorylated on 'Ser-140' (gamma-H2AX) generated during DNA replication and required for DNA double strand break repair. Mediates RPA2 dephosphorylation by recruiting PPP4C to RPA2 in a DNA damage-dependent manner. RPA2 dephosphorylation is required for the efficient RPA2-mediated recruitment of RAD51 to chromatin following double strand breaks, an essential step for DNA repair. In Pongo abelii (Sumatran orangutan), this protein is Serine/threonine-protein phosphatase 4 regulatory subunit 2 (PPP4R2).